Reading from the N-terminus, the 101-residue chain is Small ribosomal subunit protein uS14 (101 aa).

Positions 51–72 (LPRDSSPSRQRNPCRQTGRPHG) are disordered. The span at 52-65 (PRDSSPSRQRNPCR) shows a compositional bias: polar residues.

The protein belongs to the universal ribosomal protein uS14 family. As to quaternary structure, part of the 30S ribosomal subunit. Contacts proteins S3 and S10.

Its function is as follows. Binds 16S rRNA, required for the assembly of 30S particles and may also be responsible for determining the conformation of the 16S rRNA at the A site. In Buchnera aphidicola subsp. Acyrthosiphon kondoi (Acyrthosiphon kondoi symbiotic bacterium), this protein is Small ribosomal subunit protein uS14.